Here is a 385-residue protein sequence, read N- to C-terminus: MEESITGLITSFGFSSPEAFIALLVVVLAVIGAVIVVITFRPLMEYYPYTYPNARVRAKIGKILNEKQIAELAESESLEEVQNFLRGHKDYAKFVDKYPIEQALDANLAESYDLLARIAPGDLKPTFDLMLDQWDIKNIKSVLIAREAKLNEEETRELLVPYGELKDDQDKLIEADSVQDLIVALEGTPYAKILEEALPDYNENKTLLTLESALDNYYYERLLVKSSSQADDNTRMLHSYIGTKVDIANIKIILRAKADNLTYDQIKPYVIDNGYQLRGWKLKEFMESEDMNSLLSSIESSEYGSIVADHIPEYNSTKSITVFDEALDSYERNMAKNIFRKKPFGVGPIVGFMNKKEIEIKNLKIIARSKRGSSIPSSEIKEMLL.

Belongs to the V-ATPase V0D/AC39 subunit family. Has multiple subunits with at least A(3), B(3), C, D, E, F, H, I and proteolipid K(x).

The protein localises to the cell membrane. Its function is as follows. Component of the A-type ATP synthase that produces ATP from ADP in the presence of a proton gradient across the membrane. The polypeptide is A-type ATP synthase subunit C (Methanosphaera stadtmanae (strain ATCC 43021 / DSM 3091 / JCM 11832 / MCB-3)).